The chain runs to 570 residues: MTWQGWAEIALTLSLAVAIGWPLGVFLSRVWNGEKTFLDPVMRPVEGLFYKACGVDPSKSQSWHAYALALLAFNLIGFVFVYAVLRLQGVLPLNPQGFPGLSGHLAFNTAISFITNTNWQSYAGETTMSTLSQMLVLTVQNFVSAATGATVAAALARAFVANRGEGVGNFWADLVRTTLYLLLPLAFVVAVVLAALGLPQTLAAGVTAHTLEGAEQKISLYAVASQEAIKMLGINGGGIFNANSAHPFENPTPLTNLITAISINTLGWAAFFAFGRTVLAKKDVRALVIAAFVLLFAGAVGVYATETQAPPAQVAAQVDTSANMEGKEVRFGAPATAAWVAMTTGASNGSVNGKHSSLMPLGGGIAMFLMQLGEILPGGIGSGVAIMVVMALLSVFVAGLMVGRTPEYLGKKVEAREIQFSILAVVIIPLSMLGFSGIAAVLPEALKGLMHSGPHGLSEILYAYVSGTANNGSAFAGLTANAPWWNVTLGIAMAMGRFMPIVAVLAIAGSLVTKPKLAPTAGTLPTDGGLFIGLLIGVILILGGLQFFPAMALGPIVEHFQALDAVAALR.

A run of 11 helical transmembrane segments spans residues A7–L27, A65–L85, P95–T115, L135–L155, L179–P199, L254–F274, A286–E306, G383–G403, I422–L442, L489–G509, and G528–F548.

Belongs to the KdpA family. As to quaternary structure, the system is composed of three essential subunits: KdpA, KdpB and KdpC.

It is found in the cell inner membrane. In terms of biological role, part of the high-affinity ATP-driven potassium transport (or Kdp) system, which catalyzes the hydrolysis of ATP coupled with the electrogenic transport of potassium into the cytoplasm. This subunit binds the periplasmic potassium ions and delivers the ions to the membrane domain of KdpB through an intramembrane tunnel. In Caulobacter vibrioides (strain ATCC 19089 / CIP 103742 / CB 15) (Caulobacter crescentus), this protein is Potassium-transporting ATPase potassium-binding subunit.